The following is a 337-amino-acid chain: Lipoyl synthase (337 aa).

Cys-81, Cys-86, Cys-92, Cys-107, Cys-111, Cys-114, and Ser-323 together coordinate [4Fe-4S] cluster. The Radical SAM core domain occupies 93–312 (FSHGTATFMI…EDYGNALGFS (220 aa)).

The protein belongs to the radical SAM superfamily. Lipoyl synthase family. It depends on [4Fe-4S] cluster as a cofactor.

It localises to the cytoplasm. It catalyses the reaction [[Fe-S] cluster scaffold protein carrying a second [4Fe-4S](2+) cluster] + N(6)-octanoyl-L-lysyl-[protein] + 2 oxidized [2Fe-2S]-[ferredoxin] + 2 S-adenosyl-L-methionine + 4 H(+) = [[Fe-S] cluster scaffold protein] + N(6)-[(R)-dihydrolipoyl]-L-lysyl-[protein] + 4 Fe(3+) + 2 hydrogen sulfide + 2 5'-deoxyadenosine + 2 L-methionine + 2 reduced [2Fe-2S]-[ferredoxin]. It participates in protein modification; protein lipoylation via endogenous pathway; protein N(6)-(lipoyl)lysine from octanoyl-[acyl-carrier-protein]: step 2/2. In terms of biological role, catalyzes the radical-mediated insertion of two sulfur atoms into the C-6 and C-8 positions of the octanoyl moiety bound to the lipoyl domains of lipoate-dependent enzymes, thereby converting the octanoylated domains into lipoylated derivatives. This Xanthomonas campestris pv. campestris (strain B100) protein is Lipoyl synthase.